The chain runs to 197 residues: Imidazoleglycerol-phosphate dehydratase (197 aa).

The protein belongs to the imidazoleglycerol-phosphate dehydratase family.

It localises to the cytoplasm. The catalysed reaction is D-erythro-1-(imidazol-4-yl)glycerol 3-phosphate = 3-(imidazol-4-yl)-2-oxopropyl phosphate + H2O. It participates in amino-acid biosynthesis; L-histidine biosynthesis; L-histidine from 5-phospho-alpha-D-ribose 1-diphosphate: step 6/9. The polypeptide is Imidazoleglycerol-phosphate dehydratase (Rhodopseudomonas palustris (strain TIE-1)).